The chain runs to 107 residues: Quaternary ammonium compound-resistance protein QacH (107 aa).

4 helical membrane passes run 1–21, 26–46, 57–77, and 84–104; these read MPYLYLLLSIVSEVIGSAFLK, FSKLYPTITTIISFLICFYFL, ITYASWAGLGLVLTTIVSVLI, and LISIISIILIIFGVVLLNTFG.

This sequence belongs to the drug/metabolite transporter (DMT) superfamily. Small multidrug resistance (SMR) (TC 2.A.7.1) family.

It is found in the cell membrane. Functionally, multidrug exporter. Is implicated for the resistance to bacteriocidal quaternary ammonium compounds. The protein is Quaternary ammonium compound-resistance protein QacH (qacH) of Staphylococcus saprophyticus.